The following is a 195-amino-acid chain: Holliday junction branch migration complex subunit RuvA (195 aa).

The tract at residues 1–63 is domain I; sequence MIASVRGEVI…EDSMTLYGFV (63 aa). Positions 64 to 142 are domain II; that stretch reads DGDARDLFLT…PVSAGGGAAV (79 aa). Residues 143-150 form a flexible linker region; the sequence is GGHAIRGP. Residues 150-195 are domain III; the sequence is PVVEALVGLGFAAKQAEEATDKVLANDPEATTSSALRAALSMLGKK.

The protein belongs to the RuvA family. In terms of assembly, homotetramer. Forms an RuvA(8)-RuvB(12)-Holliday junction (HJ) complex. HJ DNA is sandwiched between 2 RuvA tetramers; dsDNA enters through RuvA and exits via RuvB. An RuvB hexamer assembles on each DNA strand where it exits the tetramer. Each RuvB hexamer is contacted by two RuvA subunits (via domain III) on 2 adjacent RuvB subunits; this complex drives branch migration. In the full resolvosome a probable DNA-RuvA(4)-RuvB(12)-RuvC(2) complex forms which resolves the HJ.

The protein localises to the cytoplasm. Its function is as follows. The RuvA-RuvB-RuvC complex processes Holliday junction (HJ) DNA during genetic recombination and DNA repair, while the RuvA-RuvB complex plays an important role in the rescue of blocked DNA replication forks via replication fork reversal (RFR). RuvA specifically binds to HJ cruciform DNA, conferring on it an open structure. The RuvB hexamer acts as an ATP-dependent pump, pulling dsDNA into and through the RuvAB complex. HJ branch migration allows RuvC to scan DNA until it finds its consensus sequence, where it cleaves and resolves the cruciform DNA. This Mycolicibacterium smegmatis (strain ATCC 700084 / mc(2)155) (Mycobacterium smegmatis) protein is Holliday junction branch migration complex subunit RuvA.